The chain runs to 359 residues: Protein-arginine kinase (359 aa).

The region spanning 25–257 (IVISSRVRLA…QQVIEQERML (233 aa)) is the Phosphagen kinase C-terminal domain. Residues 28–32 (SSRVR), H93, R128, 179–183 (RASLM), and 210–215 (RGIYGE) each bind ATP. The short motif at 340–345 (RDAKRA) is the RDXXRA motif of the pArg binding pocket involved in allosteric regulation element.

Belongs to the ATP:guanido phosphotransferase family.

The enzyme catalyses L-arginyl-[protein] + ATP = N(omega)-phospho-L-arginyl-[protein] + ADP + H(+). Its activity is regulated as follows. Appears to be allosterically activated by the binding of pArg-containing polypeptides to the pArg-binding pocket localized in the C-terminal domain of McsB. Its function is as follows. Catalyzes the specific phosphorylation of arginine residues in proteins. The sequence is that of Protein-arginine kinase from Syntrophomonas wolfei subsp. wolfei (strain DSM 2245B / Goettingen).